Consider the following 360-residue polypeptide: Nodulin-44 (360 aa).

A signal peptide spans 1 to 23; it reads MEEKILMRVIVITVFLFIGAATA. Disordered stretches follow at residues 123–148 and 228–249; these read FSPRGRRSKLDNHQTDAGTLGKVIPL and FSPRGRRSKLDNHQTDAGTLGR.

Belongs to the nodulin 20 family.

This is Nodulin-44 from Glycine max (Soybean).